We begin with the raw amino-acid sequence, 498 residues long: NAC domain-containing protein 75 (498 aa).

The 168-residue stretch at 48–215 (LPAGVKFDPT…ELVVSKIFYQ (168 aa)) folds into the NAC domain. A DNA-binding region spans residues 166 to 221 (KGCKKILVLYTNFGKNRKPEKTNWVMHQYHLGTHEEEKEGELVVSKIFYQTQPRQC). Disordered regions lie at residues 225-278 (SSTS…PNRS), 338-374 (VMAEQHRHRHQPSSSTSHHMAHDHHHHHHQQQQQRHH), 423-443 (QQQLRQEGEEEHNDGKMGGRS), and 457-498 (STTH…DHHG). The span at 233-248 (IGGGGGEASSGGGGGE) shows a compositional bias: gly residues. A compositionally biased stretch (low complexity) spans 256 to 266 (GTTSGGSCSSS). The span at 356-374 (HMAHDHHHHHHQQQQQRHH) shows a compositional bias: basic residues. Residues 466–475 (GSSSMGNQQE) are compositionally biased toward polar residues.

Expressed in the vascular cylinder of roots. Expressed in the differentiation zone of the root stele.

The protein localises to the nucleus. In terms of biological role, transcription activator involved in xylem formation. Promotes the expression of the secondary wall-associated transcription factor MYB46. Functions upstream of NAC030/VND7, a master switch of xylem vessel differentiation. Acts as a upstream regulator of NAC101/VND6 and LBD30/ASL19. The polypeptide is NAC domain-containing protein 75 (Arabidopsis thaliana (Mouse-ear cress)).